We begin with the raw amino-acid sequence, 147 residues long: Ubiquitin-like-conjugating enzyme ATG10 (147 aa).

The active-site Glycyl thioester intermediate is Cys-116.

Belongs to the ATG10 family. Forms homooligomers. Interacts with ATG10. Interacts with ATG7 and ATG12.

The protein localises to the preautophagosomal structure membrane. E2-like enzyme required for the cytoplasm to vacuole transport (Cvt), autophagy and nucleophagy. Acts as an E2-like enzyme that catalyzes the conjugation of ATG12 to ATG5. ATG12 conjugation to ATG5 is required for proper localization of ATG8 to the preautophagosomal structure (PAS). Likely serves as an ATG5-recognition molecule. This Kluyveromyces marxianus (strain DMKU3-1042 / BCC 29191 / NBRC 104275) (Yeast) protein is Ubiquitin-like-conjugating enzyme ATG10.